Here is a 378-residue protein sequence, read N- to C-terminus: C-type lectin domain family 17, member A (378 aa).

A disordered region spans residues 1–119 (MHNLYSITGY…PPLPCKPRNM (119 aa)). At 1–172 (MHNLYSITGY…GCCQKRWMVY (172 aa)) the chain is on the cytoplasmic side. Composition is skewed to acidic residues over residues 17-27 (MEEEEEDDDYE), 43-53 (MEEEEEDDDYE), and 69-79 (MEEEEEDDDYE). Over residues 86 to 101 (KDLPPKPGSSAPPRPP) the composition is skewed to pro residues. A helical; Signal-anchor for type II membrane protein membrane pass occupies residues 173–193 (LCLLVVTSLFLGCLGLTVTLI). Residues 194 to 378 (KYQELMEELR…YWICERKCSC (185 aa)) are Extracellular-facing. Residues Asn-215 and Asn-237 are each glycosylated (N-linked (GlcNAc...) asparagine). Disulfide bonds link Cys-254–Cys-265, Cys-282–Cys-372, and Cys-350–Cys-364. The region spanning 261-373 (FEGKCYYFSP…CYKTTYWICE (113 aa)) is the C-type lectin domain. Residue Asn-285 is glycosylated (N-linked (GlcNAc...) asparagine). Ca(2+) contacts are provided by Glu-341, Asn-343, Glu-348, Asn-360, and Asp-361.

Oligomer; disulfide-linked. Phosphorylated on tyrosine residues. As to expression, expressed on dividing B-cells of germinal centers in various tissues, including lymph nodes, tonsils, stomach, intestine, appendix and spleen.

The protein localises to the membrane. In terms of biological role, cell surface receptor which may be involved in carbohydrate-mediated communication between cells in the germinal center. Binds glycans with terminal alpha-linked mannose or fucose residues. The polypeptide is C-type lectin domain family 17, member A (CLEC17A) (Homo sapiens (Human)).